The primary structure comprises 51 residues: Large ribosomal subunit protein eL39 (51 aa).

Belongs to the eukaryotic ribosomal protein eL39 family. In terms of assembly, component of the large ribosomal subunit. Interacts with IMPACT.

The protein localises to the cytoplasm. Functionally, RNA-binding component of the large ribosomal subunit. The ribosome is a large ribonucleoprotein complex responsible for the synthesis of proteins in the cell. This is Large ribosomal subunit protein eL39 (Rpl39) from Mus musculus (Mouse).